The chain runs to 163 residues: GPI-anchored protein LLG2 (163 aa).

The signal sequence occupies residues 1 to 23 (MEISPYCLLSLLPIFLLSGFSLS). The N-linked (GlcNAc...) asparagine glycan is linked to asparagine 52. Residue serine 135 is the site of GPI-anchor amidated serine attachment. Residues 136–163 (DSIPRASTTASLAVLSTFLVLCLLFLSS) constitute a propeptide, removed in mature form.

Expressed in pollen, pollen tubes, sporophytic pistil tissues, in the early stages of female gametophyte development, and in unfertilized, mature ovules.

The protein localises to the cell membrane. The protein is GPI-anchored protein LLG2 of Arabidopsis thaliana (Mouse-ear cress).